A 326-amino-acid chain; its full sequence is Malate dehydrogenase (326 aa).

NAD(+) is bound at residue 11 to 17 (GAAGQIG). Substrate-binding residues include arginine 92 and arginine 98. Residues asparagine 105, glutamine 112, and 129-131 (VGN) each bind NAD(+). The substrate site is built by asparagine 131 and arginine 162. The Proton acceptor role is filled by histidine 187.

This sequence belongs to the LDH/MDH superfamily. MDH type 2 family.

It carries out the reaction (S)-malate + NAD(+) = oxaloacetate + NADH + H(+). Functionally, catalyzes the reversible oxidation of malate to oxaloacetate. This chain is Malate dehydrogenase, found in Leptospira interrogans serogroup Icterohaemorrhagiae serovar Lai (strain 56601).